Here is a 328-residue protein sequence, read N- to C-terminus: Ferredoxin--NADP reductase 1 (328 aa).

FAD contacts are provided by E37, K45, Y49, V89, and T310.

The protein belongs to the ferredoxin--NADP reductase type 2 family. As to quaternary structure, homodimer. The cofactor is FAD.

It catalyses the reaction 2 reduced [2Fe-2S]-[ferredoxin] + NADP(+) + H(+) = 2 oxidized [2Fe-2S]-[ferredoxin] + NADPH. The polypeptide is Ferredoxin--NADP reductase 1 (Latilactobacillus sakei subsp. sakei (strain 23K) (Lactobacillus sakei subsp. sakei)).